A 415-amino-acid chain; its full sequence is WD repeat and FYVE domain-containing protein 2 (415 aa).

WD repeat units follow at residues 71–103 (HHFMPVAPTSLYYSEETYKLLVGLINGNVYEFS), 119–148 (CHAGPISGLGFALSSELIFSCSRDKSIVWH), 202–232 (AHTNAITSLTWDGNKKVLYSGSSDHLIIMWD), and 245–284 (GHNGKVTTLCAAPAAKRLFSADEHGKLMCWDMNCKRVETP). An FYVE-type zinc finger spans residues 286 to 357 (WKTSDCCQKC…ICNDCNARMK (72 aa)). 8 residues coordinate Zn(2+): cysteine 292, cysteine 295, cysteine 319, cysteine 322, cysteine 327, cysteine 330, cysteine 349, and cysteine 352. A WD 5 repeat occupies 373-403 (EIHTGITAMHLQETLGLLVTSGQNRVIMIWD).

Its function is as follows. Plays a role in coelomocyte endocytosis. This is WD repeat and FYVE domain-containing protein 2 (wdfy-2) from Caenorhabditis elegans.